A 438-amino-acid polypeptide reads, in one-letter code: Ribosome biogenesis protein NOP53 (438 aa).

2 disordered regions span residues 1-23 (MVAG…WRKG) and 247-346 (HPKY…RKKE). A compositionally biased stretch (basic residues) spans 12–21 (GSRHNKKYWR). 3 stretches are compositionally biased toward basic and acidic residues: residues 265-288 (KSMK…MTKE), 297-318 (QKLD…DSHN), and 325-346 (LHKE…RKKE).

Belongs to the NOP53 family.

The protein localises to the nucleus. The protein resides in the nucleolus. Its subcellular location is the nucleoplasm. Functionally, may play a role in ribosome biogenesis, being required for integration of the 5S RNP into the ribosomal large subunit. This chain is Ribosome biogenesis protein NOP53, found in Caenorhabditis elegans.